A 245-amino-acid polypeptide reads, in one-letter code: RAD51-like protein 1 (245 aa).

As to quaternary structure, interacts with brc-2 and rad-51.

Its subcellular location is the nucleus. Its function is as follows. Has a role in the homologous recombination repair (HRR) of genomic DNA during meiosis. Required for rad-51 recruitment onto ssDNA gaps generated at stalled replication fork barriers. The protein is RAD51-like protein 1 (rfs-1) of Caenorhabditis elegans.